Reading from the N-terminus, the 293-residue chain is Dioxygenase cdmA (293 aa).

Fe cation-binding residues include His135, Asp137, and His212.

Belongs to the PhyH family. Homodimer. Fe cation is required as a cofactor.

It carries out the reaction chrodrimanin C + 2-oxoglutarate + O2 = verruculide A + succinate + CO2 + H2O. The enzyme catalyses chrodrimanin H + 2-oxoglutarate + O2 = chrodrimanin E + succinate + CO2 + H2O. It functions in the pathway secondary metabolite biosynthesis; terpenoid biosynthesis. Its function is as follows. Dioxygenase; part of the gene cluster that mediates the biosynthesis of chrodrimanin B, a meroterpenoid that acts as a potent blocker of insect GABA-gated chloride channels. The first step of the pathway is the biosynthesis of 6-hydroxymellein by the polyketide synthase cdmE. The prenyltransferase cdmH acts as a 6-hydroxymellein 5-farnesyltransferase and produces the hydrophobic metabolite verruculide C. The FAD-dependent monooxygenase cdmI further converts verruculide C into verruculide B. The terpene cyclase cdmG then produced the pentacyclic molecule 3-hydroxypentacecilide A, the backbone structure of chrodrimanin B, via folding the farnesyl moiety of the substrate into the chair-boat conformation. The short-chain dehydrogenase/reductase cdmF functions as the 3-OH dehydrogenase that oxidizes the C-3 hydroxyl group of 3-hydroxypentacecilide A and produces chrodrimanin C, the dehydrogenated product of 3-hydroxypentacecilide A. The cytochrome P450 monooxygenase cdmJ then accepts both 3-hydroxypentacecilide A and chrodrimanin C and functions as a C-7-beta-hydroxylase to produce respectively chrodrimanin H and chrodrimanin F. The dioxygenase cdmA accepts chrodrimanin H to afford chrodrimanin E, which is further transformed to chrodrimanin A by the dioxygenase cdmD. CdmA can also accept chrodrimanin C as substrate to convert it into verruculide A, which is further converted into chrodrimanin T by cdmD. The last step of the biosynthesis is proposed to be performed by the acetyltransferase cdmC which acetylates chrodrimanin A to yield chrodrimanin B. The pathway may also lead to the production of additional shunt products, including chrodrimanins T and U. The polypeptide is Dioxygenase cdmA (Talaromyces verruculosus (Penicillium verruculosum)).